Reading from the N-terminus, the 303-residue chain is Phosphoglycerate mutase 3 (303 aa).

Substrate-binding positions include 13–20, 26–27, arginine 70, 120–123, lysine 131, and 147–148; these read RHGQSELN, CG, ERHY, and RR. Histidine 14 serves as the catalytic Tele-phosphohistidine intermediate. The Proton donor/acceptor role is filled by glutamate 120. The disordered stretch occupies residues 168–198; sequence NDQGSSTGYDFKEPNRHLKYGPEEKANERLP. Positions 177–198 are enriched in basic and acidic residues; it reads DFKEPNRHLKYGPEEKANERLP. 236 to 237 contributes to the substrate binding site; sequence GS.

Belongs to the phosphoglycerate mutase family. BPG-dependent PGAM subfamily.

The enzyme catalyses (2R)-2-phosphoglycerate = (2R)-3-phosphoglycerate. It functions in the pathway carbohydrate degradation; glycolysis; pyruvate from D-glyceraldehyde 3-phosphate: step 3/5. In terms of biological role, could be non-functional. The protein is Phosphoglycerate mutase 3 (GPM3) of Saccharomyces cerevisiae (strain ATCC 204508 / S288c) (Baker's yeast).